Here is a 358-residue protein sequence, read N- to C-terminus: DNA replication and repair protein RecF (358 aa).

Residue 30-37 (GANGSGKT) coordinates ATP.

It belongs to the RecF family.

It is found in the cytoplasm. In terms of biological role, the RecF protein is involved in DNA metabolism; it is required for DNA replication and normal SOS inducibility. RecF binds preferentially to single-stranded, linear DNA. It also seems to bind ATP. The polypeptide is DNA replication and repair protein RecF (Acinetobacter baylyi (strain ATCC 33305 / BD413 / ADP1)).